Reading from the N-terminus, the 491-residue chain is Acetylcholine receptor subunit epsilon (491 aa).

The signal sequence occupies residues 1–20; sequence MAGALLCALLLLQLLGRGEG. Over 21–239 the chain is Extracellular; that stretch reads KNEELRLYHY…VIYSLIIRRK (219 aa). 2 N-linked (GlcNAc...) asparagine glycosylation sites follow: Asn86 and Asn161. Residues Cys148 and Cys162 are joined by a disulfide bond. The chain crosses the membrane as a helical span at residues 240 to 264; the sequence is PLFYVINIIVPCVLISGLVLLAYFL. Topologically, residues 265–272 are cytoplasmic; sequence PAQAGGQK. A helical membrane pass occupies residues 273 to 291; the sequence is CTVSINVLLAQTVFLFLIA. Residues 292 to 306 lie on the Extracellular side of the membrane; the sequence is QKTPETSLSVPLLGR. A helical membrane pass occupies residues 307 to 328; it reads YLIFVMVVATLIVMNCVIVLNV. The Cytoplasmic segment spans residues 329-456; it reads SLRTPTTHAM…WVRMGKALDS (128 aa). Residues 457–480 traverse the membrane as a helical segment; sequence ICFWAALVLFLVGSSLIFLGAYFN. Over 481-491 the chain is Extracellular; that stretch reads RVPQLPYPPCM.

Belongs to the ligand-gated ion channel (TC 1.A.9) family. Acetylcholine receptor (TC 1.A.9.1) subfamily. Epsilon/CHRNE sub-subfamily.

The protein localises to the postsynaptic cell membrane. It localises to the cell membrane. It carries out the reaction K(+)(in) = K(+)(out). It catalyses the reaction Na(+)(in) = Na(+)(out). Functionally, after binding acetylcholine, the AChR responds by an extensive change in conformation that affects all subunits and leads to opening of an ion-conducting channel across the plasma membrane. In Bos taurus (Bovine), this protein is Acetylcholine receptor subunit epsilon (CHRNE).